Here is a 77-residue protein sequence, read N- to C-terminus: Large ribosomal subunit protein uL29 (77 aa).

The protein belongs to the universal ribosomal protein uL29 family.

The polypeptide is Large ribosomal subunit protein uL29 (Mycolicibacterium gilvum (strain PYR-GCK) (Mycobacterium gilvum (strain PYR-GCK))).